Reading from the N-terminus, the 208-residue chain is Interleukin-6 (208 aa).

The signal sequence occupies residues 1 to 20 (MNSLSTIAFSLGLLLVTATA). Cysteines 67 and 73 form a disulfide. The residue at position 76 (Ser76) is a Phosphoserine. Cysteines 96 and 106 form a disulfide. N-linked (GlcNAc...) asparagine glycosylation is present at Asn167.

The protein belongs to the IL-6 superfamily. As to quaternary structure, component of a hexamer of two molecules each of IL6, IL6R and IL6ST; first binds to IL6R to associate with the signaling subunit IL6ST. Interacts with IL6R (via the N-terminal ectodomain); this interaction may be affected by IL6R-binding with SORL1, hence decreasing IL6 cis signaling. Interacts with SORL1 (via the N-terminal ectodomain); this interaction leads to IL6 internalization and lysosomal degradation. May form a trimeric complex with the soluble SORL1 ectodomain and soluble IL6R receptor; this interaction might stabilize circulating IL6, hence promoting IL6 trans signaling.

It localises to the secreted. Functionally, cytokine with a wide variety of biological functions in immunity, tissue regeneration, and metabolism. Binds to IL6R, then the complex associates to the signaling subunit IL6ST/gp130 to trigger the intracellular IL6-signaling pathway. The interaction with the membrane-bound IL6R and IL6ST stimulates 'classic signaling', whereas the binding of IL6 and soluble IL6R to IL6ST stimulates 'trans-signaling'. Alternatively, 'cluster signaling' occurs when membrane-bound IL6:IL6R complexes on transmitter cells activate IL6ST receptors on neighboring receiver cells. In terms of biological role, IL6 is a potent inducer of the acute phase response. Rapid production of IL6 contributes to host defense during infection and tissue injury, but excessive IL6 synthesis is involved in disease pathology. In the innate immune response, is synthesized by myeloid cells, such as macrophages and dendritic cells, upon recognition of pathogens through toll-like receptors (TLRs) at the site of infection or tissue injury. In the adaptive immune response, is required for the differentiation of B cells into immunoglobulin-secreting cells. Plays a major role in the differentiation of CD4(+) T cell subsets. Essential factor for the development of T follicular helper (Tfh) cells that are required for the induction of germinal-center formation. Required to drive naive CD4(+) T cells to the Th17 lineage. Also required for proliferation of myeloma cells and the survival of plasmablast cells. Its function is as follows. Acts as an essential factor in bone homeostasis and on vessels directly or indirectly by induction of VEGF, resulting in increased angiogenesis activity and vascular permeability. Induces, through 'trans-signaling' and synergistically with IL1B and TNF, the production of VEGF. Involved in metabolic controls, is discharged into the bloodstream after muscle contraction increasing lipolysis and improving insulin resistance. 'Trans-signaling' in central nervous system also regulates energy and glucose homeostasis. Mediates, through GLP-1, crosstalk between insulin-sensitive tissues, intestinal L cells and pancreatic islets to adapt to changes in insulin demand. Also acts as a myokine. Plays a protective role during liver injury, being required for maintenance of tissue regeneration. Also has a pivotal role in iron metabolism by regulating HAMP/hepcidin expression upon inflammation or bacterial infection. Through activation of IL6ST-YAP-NOTCH pathway, induces inflammation-induced epithelial regeneration. This is Interleukin-6 (IL6) from Delphinapterus leucas (Beluga whale).